The sequence spans 281 residues: Ribosomal protein L11 methyltransferase (281 aa).

The S-adenosyl-L-methionine site is built by threonine 131, glycine 152, aspartate 174, and asparagine 217.

Belongs to the methyltransferase superfamily. PrmA family.

It localises to the cytoplasm. It carries out the reaction L-lysyl-[protein] + 3 S-adenosyl-L-methionine = N(6),N(6),N(6)-trimethyl-L-lysyl-[protein] + 3 S-adenosyl-L-homocysteine + 3 H(+). In terms of biological role, methylates ribosomal protein L11. The sequence is that of Ribosomal protein L11 methyltransferase from Phocaeicola vulgatus (strain ATCC 8482 / DSM 1447 / JCM 5826 / CCUG 4940 / NBRC 14291 / NCTC 11154) (Bacteroides vulgatus).